Reading from the N-terminus, the 244-residue chain is Small ribosomal subunit protein uS2 (244 aa).

The protein belongs to the universal ribosomal protein uS2 family.

This Halalkalibacterium halodurans (strain ATCC BAA-125 / DSM 18197 / FERM 7344 / JCM 9153 / C-125) (Bacillus halodurans) protein is Small ribosomal subunit protein uS2.